The primary structure comprises 423 residues: ATP-dependent Clp protease ATP-binding subunit ClpX (423 aa).

One can recognise a ClpX-type ZB domain in the interval 1–50 (MTDDTEYRCSFCGKEHHQVDDLIAGPDVRICSECVVLSCEIVEDRRNEAL). Residues cysteine 9, cysteine 12, cysteine 31, and cysteine 34 each contribute to the Zn(2+) site. 126–133 (PTGCGKTY) lines the ATP pocket.

This sequence belongs to the ClpX chaperone family. Component of the ClpX-ClpP complex. Forms a hexameric ring that, in the presence of ATP, binds to fourteen ClpP subunits assembled into a disk-like structure with a central cavity, resembling the structure of eukaryotic proteasomes.

Its function is as follows. ATP-dependent specificity component of the Clp protease. It directs the protease to specific substrates. Can perform chaperone functions in the absence of ClpP. In Tropheryma whipplei (strain TW08/27) (Whipple's bacillus), this protein is ATP-dependent Clp protease ATP-binding subunit ClpX.